The following is a 237-amino-acid chain: DCN1-like protein 5 (237 aa).

A Phosphoserine modification is found at serine 41. Residues 46–232 (FSRKKCLAWF…LLDEFVEWQK (187 aa)) enclose the DCUN1 domain.

Part of a complex that contains DCUN1D5, CUL1 and RBX1; this interaction is bridged by CUL1. Interacts (via the DCUN1 domain) with the unneddylated cullins: interacts with CUL1, CUL2, CUL3, CUL4A, CUL4B and CUL5; these interactions promote the cullin neddylation and the identity of the cullin dictates the affinity of the interaction. Interacts (via DCUN1 domain) with UBE2M (N-terminally acetylated form) and probably with UBE2F (N-terminally acetylated form). May also interact with regulators or subunits of cullin-RING ligases such as RBX1, RNF7, ELOB and DDB1; these interactions are bridged by cullins. Interacts with CAND1; this interaction is bridged by cullins and strongly inhibits the neddylation of cullins. These CAND-cullin-DCNL complexes can only be neddylated in the presence of a substrate adapter. Post-translationally, phosphorylation at Ser-41 is independent of cullin's interaction. Phosphorylated in response to both TICAM1 and MYD88 dependent Toll-like receptor (TLR) pathway activation. Phosphorylated in response to IL1B stimulation.

Its subcellular location is the nucleus. It is found in the cytoplasm. The protein resides in the cytoskeleton. It localises to the spindle. Contributes to the neddylation of all cullins by transferring NEDD8 from N-terminally acetylated NEDD8-conjugating E2s enzyme to different cullin C-terminal domain-RBX complexes which is necessary for the activation of cullin-RING E3 ubiquitin ligases (CRLs). May play a role in DNA damage response and may participate in cell proliferation and anchorage-independent cell growth. The chain is DCN1-like protein 5 from Rattus norvegicus (Rat).